The following is a 343-amino-acid chain: Nuclear hormone receptor family member nhr-167 (343 aa).

The segment at residues 5–81 (HQKCAVCGRF…VGMTLPSYLL (77 aa)) is a DNA-binding region (nuclear receptor). NR C4-type zinc fingers lie at residues 8 to 28 (CAVC…CNSC) and 45 to 64 (CFRG…CTSC). Residues 101-339 (THNKRMDSLF…KKLVKDGIEA (239 aa)) form the NR LBD domain.

The protein belongs to the nuclear hormone receptor family.

The protein resides in the nucleus. Its function is as follows. Orphan nuclear receptor. This Caenorhabditis elegans protein is Nuclear hormone receptor family member nhr-167 (nhr-167).